Consider the following 183-residue polypeptide: Dual-action ribosomal maturation protein DarP (183 aa).

Belongs to the DarP family.

Its subcellular location is the cytoplasm. In terms of biological role, member of a network of 50S ribosomal subunit biogenesis factors which assembles along the 30S-50S interface, preventing incorrect 23S rRNA structures from forming. Promotes peptidyl transferase center (PTC) maturation. In Salmonella paratyphi A (strain ATCC 9150 / SARB42), this protein is Dual-action ribosomal maturation protein DarP.